The sequence spans 309 residues: Cytidine deaminase (309 aa).

CMP/dCMP-type deaminase domains follow at residues 48 to 168 (DEDA…FGPR) and 200 to 309 (DDND…SLSL). Residue 89 to 91 (NME) participates in substrate binding. H102 serves as a coordination point for Zn(2+). E104 acts as the Proton donor in catalysis. Residues C129 and C132 each coordinate Zn(2+).

It belongs to the cytidine and deoxycytidylate deaminase family. Homodimer. The cofactor is Zn(2+).

It carries out the reaction cytidine + H2O + H(+) = uridine + NH4(+). The catalysed reaction is 2'-deoxycytidine + H2O + H(+) = 2'-deoxyuridine + NH4(+). This enzyme scavenges exogenous and endogenous cytidine and 2'-deoxycytidine for UMP synthesis. The polypeptide is Cytidine deaminase (Sodalis glossinidius (strain morsitans)).